We begin with the raw amino-acid sequence, 283 residues long: MKQYLELCRRIVDEGHWVENERTGKRCLTVINADLTYDVANNQFPLVTTRKSFWKAAVAELLGYIRGYDNAEDFRKLGTKTWDANANLNDAWLNNPYRKGEDDMGRVYGVQGRAWAKPDGGHIDQLRKIVDDLTRGVDDRGEILNFYNPGEFHMGCLRPCMYSHHFSLLGDTLYLNSTQRSCDVPLGLNFNMVQVYVFLAIMAQITGKKPGQAFHKIVNAHIYEDQLALMRDVQLKREPLQAPTFHINPEIKSLEDLETWVTLDDFWVEGYEHHDPIQYPFSV.

A dUMP-binding site is contributed by arginine 22. Cysteine 160 serves as the catalytic Nucleophile. DUMP-binding positions include 180–183 (RSCD), asparagine 191, and 221–223 (HIY). Aspartate 183 is a binding site for (6R)-5,10-methylene-5,6,7,8-tetrahydrofolate. Serine 282 is a binding site for (6R)-5,10-methylene-5,6,7,8-tetrahydrofolate.

Belongs to the thymidylate synthase family. Bacterial-type ThyA subfamily. As to quaternary structure, homodimer.

Its subcellular location is the cytoplasm. The catalysed reaction is dUMP + (6R)-5,10-methylene-5,6,7,8-tetrahydrofolate = 7,8-dihydrofolate + dTMP. The protein operates within pyrimidine metabolism; dTTP biosynthesis. In terms of biological role, catalyzes the reductive methylation of 2'-deoxyuridine-5'-monophosphate (dUMP) to 2'-deoxythymidine-5'-monophosphate (dTMP) while utilizing 5,10-methylenetetrahydrofolate (mTHF) as the methyl donor and reductant in the reaction, yielding dihydrofolate (DHF) as a by-product. This enzymatic reaction provides an intracellular de novo source of dTMP, an essential precursor for DNA biosynthesis. This Vibrio vulnificus (strain CMCP6) protein is Thymidylate synthase.